Reading from the N-terminus, the 234-residue chain is Thymidylate kinase (234 aa).

Position 20-27 (20-27) interacts with ATP; sequence GIDASGKT.

It belongs to the thymidylate kinase family.

It carries out the reaction dTMP + ATP = dTDP + ADP. In terms of biological role, phosphorylation of dTMP to form dTDP in both de novo and salvage pathways of dTTP synthesis. This is Thymidylate kinase from Mycoplasmopsis pulmonis (strain UAB CTIP) (Mycoplasma pulmonis).